A 226-amino-acid chain; its full sequence is 2-C-methyl-D-erythritol 4-phosphate cytidylyltransferase (226 aa).

Belongs to the IspD/TarI cytidylyltransferase family. IspD subfamily.

It carries out the reaction 2-C-methyl-D-erythritol 4-phosphate + CTP + H(+) = 4-CDP-2-C-methyl-D-erythritol + diphosphate. Its pathway is isoprenoid biosynthesis; isopentenyl diphosphate biosynthesis via DXP pathway; isopentenyl diphosphate from 1-deoxy-D-xylulose 5-phosphate: step 2/6. Its function is as follows. Catalyzes the formation of 4-diphosphocytidyl-2-C-methyl-D-erythritol from CTP and 2-C-methyl-D-erythritol 4-phosphate (MEP). The protein is 2-C-methyl-D-erythritol 4-phosphate cytidylyltransferase of Actinobacillus pleuropneumoniae serotype 7 (strain AP76).